The following is a 1105-amino-acid chain: Serine/threonine-protein kinase 4 homolog B (1105 aa).

The 252-residue stretch at 23 to 274 (FDLIECLGRG…AKDLLKHSFF (252 aa)) folds into the Protein kinase domain. ATP is bound by residues 29-37 (LGRGSFGSV) and K52. D142 acts as the Proton acceptor in catalysis. Disordered stretches follow at residues 348 to 396 (STQI…TKNN), 411 to 482 (SSSA…RQPA), and 495 to 541 (PSFG…SLPL). Low complexity-rich tracts occupy residues 358-396 (QAQQQQQQAQQQQQQQQQQQQQYQPPSPNNNNRTTTKNN) and 411-437 (SSSASASTSPSPSSISSNGNKSGTTTN). Polar residues predominate over residues 438 to 458 (DYHTGNGRTSSSSPQFGLQHQ). 2 stretches are compositionally biased toward low complexity: residues 459 to 473 (NSSNSFPSSPNTVPS) and 513 to 541 (PIGSPITKRPTPTMQSSTTTTTSSSSLPL). The segment at 516-1105 (SPITKRPTPT…SEFDLDFYNN (590 aa)) is calpain-like cysteine protease-like. Domain III regions lie at residues 641–668 (EVSAKITMEPGYYVIIPATFEPNQEGSF), 791–830 (VHTQQQMPPGCYIIVPCTYDSRQEGSFTLTCYSDCQQGSI), 836–972 (SEQI…NVIQ), and 1076–1103 (VVIPSTFEPNIQDSFNLTIYSEFDLDFY).

The protein in the N-terminal section; belongs to the protein kinase superfamily. STE Ser/Thr protein kinase family. STE20 subfamily. In the C-terminal section; belongs to the peptidase C2 family. Mn(2+) serves as cofactor.

It catalyses the reaction L-seryl-[protein] + ATP = O-phospho-L-seryl-[protein] + ADP + H(+). It carries out the reaction L-threonyl-[protein] + ATP = O-phospho-L-threonyl-[protein] + ADP + H(+). Its function is as follows. Probable serine/threonine-protein kinase. This chain is Serine/threonine-protein kinase 4 homolog B (krsB), found in Dictyostelium discoideum (Social amoeba).